A 155-amino-acid polypeptide reads, in one-letter code: UPF0178 protein RPC_3085 (155 aa).

This sequence belongs to the UPF0178 family.

The polypeptide is UPF0178 protein RPC_3085 (Rhodopseudomonas palustris (strain BisB18)).